Reading from the N-terminus, the 270-residue chain is Orotidine 5'-phosphate decarboxylase (270 aa).

Substrate-binding positions include D43, 65–67, 96–105, Y217, and R236; these read KTH and DRKFGDIGST. K98 serves as the catalytic Proton donor.

The protein belongs to the OMP decarboxylase family.

The enzyme catalyses orotidine 5'-phosphate + H(+) = UMP + CO2. Its pathway is pyrimidine metabolism; UMP biosynthesis via de novo pathway; UMP from orotate: step 2/2. In Aureobasidium pullulans (Black yeast), this protein is Orotidine 5'-phosphate decarboxylase (URA3).